Here is a 634-residue protein sequence, read N- to C-terminus: tRNA uridine 5-carboxymethylaminomethyl modification enzyme MnmG (634 aa).

14 to 19 serves as a coordination point for FAD; that stretch reads GGGHAG. 279–293 contributes to the NAD(+) binding site; it reads GPRYCPSIEDKVVRF.

This sequence belongs to the MnmG family. Homodimer. Heterotetramer of two MnmE and two MnmG subunits. The cofactor is FAD.

The protein localises to the cytoplasm. Functionally, NAD-binding protein involved in the addition of a carboxymethylaminomethyl (cmnm) group at the wobble position (U34) of certain tRNAs, forming tRNA-cmnm(5)s(2)U34. The polypeptide is tRNA uridine 5-carboxymethylaminomethyl modification enzyme MnmG (Xanthomonas oryzae pv. oryzae (strain KACC10331 / KXO85)).